Consider the following 864-residue polypeptide: Translation initiation factor IF-2 (864 aa).

A compositionally biased stretch (basic and acidic residues) spans D140 to N171. The tract at residues D140–K179 is disordered. One can recognise a tr-type G domain in the interval I364–K533. Positions G373 to T380 are G1. G373–T380 is a binding site for GTP. The segment at G398–N402 is G2. Positions D419 to G422 are G3. GTP-binding positions include D419–H423 and N473–D476. Residues N473–D476 are G4. The interval S509–K511 is G5.

Belongs to the TRAFAC class translation factor GTPase superfamily. Classic translation factor GTPase family. IF-2 subfamily.

It is found in the cytoplasm. In terms of biological role, one of the essential components for the initiation of protein synthesis. Protects formylmethionyl-tRNA from spontaneous hydrolysis and promotes its binding to the 30S ribosomal subunits. Also involved in the hydrolysis of GTP during the formation of the 70S ribosomal complex. The polypeptide is Translation initiation factor IF-2 (Buchnera aphidicola subsp. Acyrthosiphon pisum (strain Tuc7)).